A 93-amino-acid chain; its full sequence is Small ribosomal subunit protein uS15 (93 aa).

Belongs to the universal ribosomal protein uS15 family. Part of the 30S ribosomal subunit. Forms a bridge to the 50S subunit in the 70S ribosome, contacting the 23S rRNA.

In terms of biological role, one of the primary rRNA binding proteins, it binds directly to 16S rRNA where it helps nucleate assembly of the platform of the 30S subunit by binding and bridging several RNA helices of the 16S rRNA. Forms an intersubunit bridge (bridge B4) with the 23S rRNA of the 50S subunit in the ribosome. This Ehrlichia canis (strain Jake) protein is Small ribosomal subunit protein uS15.